Reading from the N-terminus, the 172-residue chain is 3-phenylpropionate/cinnamic acid dioxygenase subunit beta (172 aa).

This sequence belongs to the bacterial ring-hydroxylating dioxygenase beta subunit family. As to quaternary structure, this dioxygenase system consists of four proteins: the two subunits of the hydroxylase component (HcaE and HcaF), a ferredoxin (HcaC) and a ferredoxin reductase (HcaD).

It carries out the reaction 3-phenylpropanoate + NADH + O2 + H(+) = 3-(cis-5,6-dihydroxycyclohexa-1,3-dien-1-yl)propanoate + NAD(+). The enzyme catalyses (E)-cinnamate + NADH + O2 + H(+) = (2E)-3-(cis-5,6-dihydroxycyclohexa-1,3-dien-1-yl)prop-2-enoate + NAD(+). The protein operates within aromatic compound metabolism; 3-phenylpropanoate degradation. In terms of biological role, part of the multicomponent 3-phenylpropionate dioxygenase. Converts 3-phenylpropionic acid (PP) and cinnamic acid (CI) into 3-phenylpropionate-dihydrodiol (PP-dihydrodiol) and cinnamic acid-dihydrodiol (CI-dihydrodiol), respectively. In Escherichia coli O157:H7, this protein is 3-phenylpropionate/cinnamic acid dioxygenase subunit beta.